The sequence spans 978 residues: Mast/stem cell growth factor receptor Kit (978 aa).

A signal peptide spans 1–25 (MRGARGAWDFLFVLLLLLLVQTGSS). Residues 26–525 (QPSVSPGELS…QIHAHTLFTP (500 aa)) lie on the Extracellular side of the membrane. 5 consecutive Ig-like C2-type domains span residues 27 to 112 (PSVS…VFVR), 121 to 205 (DLPL…LKVR), 212 to 309 (PVVS…LEVV), 318 to 411 (PMMN…VNVN), and 414 to 508 (PEIL…FNFA). An intrachain disulfide couples Cys58 to Cys97. Residues Asn94, Asn130, and Asn145 are each glycosylated (N-linked (GlcNAc...) asparagine). 3 disulfides stabilise this stretch: Cys136/Cys186, Cys151/Cys183, and Cys233/Cys291. Asn284, Asn294, Asn301, Asn321, Asn353, Asn368, Asn401, Asn464, and Asn487 each carry an N-linked (GlcNAc...) asparagine glycan. Cys429 and Cys492 form a disulfide bridge. The chain crosses the membrane as a helical span at residues 526 to 546 (LLIGFVIAAGLMCIFVMILTY). The Cytoplasmic portion of the chain corresponds to 547 to 978 (KYLQKPMYEV…TQPLLVHEDV (432 aa)). Phosphotyrosine occurs at positions 548 and 554. Position 569 (Tyr569) interacts with Mg(2+). Tyr569 and Tyr571 each carry phosphotyrosine; by autocatalysis. The interval 569–571 (YVY) is important for interaction with phosphotyrosine-binding proteins. Residues 590–939 (LSFGKTLGAG…ISESTNHIYS (350 aa)) enclose the Protein kinase domain. Residues 597 to 604 (GAGAFGKV), Lys624, and 672 to 678 (EYCCYGD) each bind ATP. Phosphotyrosine; by autocatalysis is present on residues Tyr704 and Tyr722. At Tyr731 the chain carries Phosphotyrosine. Phosphoserine; by PKC/PRKCA occurs at positions 743 and 748. Catalysis depends on Asp794, which acts as the Proton acceptor. Arg798 lines the ATP pocket. Residues Asn799 and Asp812 each coordinate Mg(2+). Ser823 bears the Phosphoserine mark. Tyr825 is subject to Phosphotyrosine; by autocatalysis. Phosphoserine is present on Ser893. Residue Tyr902 is modified to Phosphotyrosine. Tyr938 carries the post-translational modification Phosphotyrosine; by autocatalysis. Residue Ser961 is modified to Phosphoserine.

This sequence belongs to the protein kinase superfamily. Tyr protein kinase family. CSF-1/PDGF receptor subfamily. Monomer in the absence of bound KITLG/SCF. Homodimer in the presence of bound KITLG/SCF, forming a heterotetramer with two KITLG/SCF molecules. Interacts (via phosphorylated tyrosine residues) with the adapter proteins GRB2 and GRB7 (via SH2 domain), and SH2B2/APS. Interacts (via C-terminus) with MPDZ (via the tenth PDZ domain). Interacts (via phosphorylated tyrosine residues) with PIK3R1 and PIK3CD. Interacts (via phosphorylated tyrosine) with CRK (isoform Crk-II), FYN, SHC1 and MATK/CHK (via SH2 domain). Interacts with LYN and FES/FPS. Interacts (via phosphorylated tyrosine residues) with the protein phosphatases PTPN6/SHP-1 (via SH2 domain), PTPN11/SHP-2 (via SH2 domain) and PTPRU. Interacts with PLCG1. Interacts with DOK1 and TEC. Interacts with IL1RAP (independent of stimulation with KITLG/SCF). A mast cell-specific KITLG/SCF-induced interleukin-33 signaling complex contains IL1RL1, IL1RAP, KIT and MYD88. In terms of processing, ubiquitinated by SOCS6. KIT is rapidly ubiquitinated after autophosphorylation induced by KITLG/SCF binding, leading to internalization and degradation. Autophosphorylated on tyrosine residues. KITLG/SCF binding promotes autophosphorylation. Phosphorylated tyrosine residues are important for interaction with specific binding partners.

Its subcellular location is the cell membrane. It catalyses the reaction L-tyrosyl-[protein] + ATP = O-phospho-L-tyrosyl-[protein] + ADP + H(+). Present in an inactive conformation in the absence of bound ligand. KITLG/SCF binding leads to dimerization and activation by autophosphorylation on tyrosine residues. Activity is down-regulated by PRKCA-mediated phosphorylation on serine residues. Functionally, tyrosine-protein kinase that acts as a cell-surface receptor for the cytokine KITLG/SCF and plays an essential role in the regulation of cell survival and proliferation, hematopoiesis, stem cell maintenance, gametogenesis, mast cell development, migration and function, and in melanogenesis. In response to KITLG/SCF binding, KIT can activate several signaling pathways. Phosphorylates PIK3R1, PLCG1, SH2B2/APS and CBL. Activates the AKT1 signaling pathway by phosphorylation of PIK3R1, the regulatory subunit of phosphatidylinositol 3-kinase. Activated KIT also transmits signals via GRB2 and activation of RAS, RAF1 and the MAP kinases MAPK1/ERK2 and/or MAPK3/ERK1. Promotes activation of STAT family members STAT1, STAT3, STAT5A and STAT5B. Activation of PLCG1 leads to the production of the cellular signaling molecules diacylglycerol and inositol 1,4,5-trisphosphate. KIT signaling is modulated by protein phosphatases, and by rapid internalization and degradation of the receptor. Activated KIT promotes phosphorylation of the protein phosphatases PTPN6/SHP-1 and PTPRU, and of the transcription factors STAT1, STAT3, STAT5A and STAT5B. Promotes phosphorylation of PIK3R1, CBL, CRK (isoform Crk-II), LYN, MAPK1/ERK2 and/or MAPK3/ERK1, PLCG1, SRC and SHC1. This chain is Mast/stem cell growth factor receptor Kit (KIT), found in Capra hircus (Goat).